The chain runs to 323 residues: Lipoyl synthase (323 aa).

Residues 1–14 show a composition bias toward basic and acidic residues; sequence MVTILDRTKPDDKR. A disordered region spans residues 1–25; that stretch reads MVTILDRTKPDDKRIRHPEKAHKPD. The [4Fe-4S] cluster site is built by cysteine 61, cysteine 66, cysteine 72, cysteine 87, cysteine 91, cysteine 94, and serine 300. Residues 73-289 form the Radical SAM core domain; sequence WEKKHATFMI…EDIAYTKGFL (217 aa).

The protein belongs to the radical SAM superfamily. Lipoyl synthase family. Requires [4Fe-4S] cluster as cofactor.

It is found in the cytoplasm. The catalysed reaction is [[Fe-S] cluster scaffold protein carrying a second [4Fe-4S](2+) cluster] + N(6)-octanoyl-L-lysyl-[protein] + 2 oxidized [2Fe-2S]-[ferredoxin] + 2 S-adenosyl-L-methionine + 4 H(+) = [[Fe-S] cluster scaffold protein] + N(6)-[(R)-dihydrolipoyl]-L-lysyl-[protein] + 4 Fe(3+) + 2 hydrogen sulfide + 2 5'-deoxyadenosine + 2 L-methionine + 2 reduced [2Fe-2S]-[ferredoxin]. It functions in the pathway protein modification; protein lipoylation via endogenous pathway; protein N(6)-(lipoyl)lysine from octanoyl-[acyl-carrier-protein]: step 2/2. Catalyzes the radical-mediated insertion of two sulfur atoms into the C-6 and C-8 positions of the octanoyl moiety bound to the lipoyl domains of lipoate-dependent enzymes, thereby converting the octanoylated domains into lipoylated derivatives. This chain is Lipoyl synthase, found in Allorhizobium ampelinum (strain ATCC BAA-846 / DSM 112012 / S4) (Agrobacterium vitis (strain S4)).